A 602-amino-acid polypeptide reads, in one-letter code: Potassium-transporting ATPase potassium-binding subunit (602 aa).

Transmembrane regions (helical) follow at residues 3–23 (ANNL…AVPV), 64–84 (QYAL…YALL), 135–155 (GLTV…LALI), 178–198 (LYVL…QGVI), 282–302 (FSNF…CLVF), 313–333 (VAVL…ETSA), 418–438 (GLYG…LMIG), 456–476 (VSIV…IAVL), 522–542 (WMTA…VLAI), and 565–585 (LFVV…YMPA).

Belongs to the KdpA family. In terms of assembly, the system is composed of three essential subunits: KdpA, KdpB and KdpC.

The protein localises to the cell inner membrane. Functionally, part of the high-affinity ATP-driven potassium transport (or Kdp) system, which catalyzes the hydrolysis of ATP coupled with the electrogenic transport of potassium into the cytoplasm. This subunit binds the periplasmic potassium ions and delivers the ions to the membrane domain of KdpB through an intramembrane tunnel. The protein is Potassium-transporting ATPase potassium-binding subunit of Burkholderia mallei (strain ATCC 23344).